Consider the following 403-residue polypeptide: Stearoyl-[acyl-carrier-protein] 9-desaturase 4, chloroplastic (403 aa).

The N-terminal 44 residues, 1–44 (MALLLNSTMTVAMKQNPATAVSFMQTTCLGSSFSPPRHLQVSCV), are a transit peptide targeting the chloroplast. Fe cation is bound by residues glutamate 140, glutamate 178, histidine 181, glutamate 231, glutamate 264, and histidine 267.

Belongs to the fatty acid desaturase type 2 family. As to quaternary structure, homodimer. The cofactor is Fe(2+). Preferentially expressed in roots.

It localises to the plastid. The protein resides in the chloroplast. It carries out the reaction octadecanoyl-[ACP] + 2 reduced [2Fe-2S]-[ferredoxin] + O2 + 2 H(+) = (9Z)-octadecenoyl-[ACP] + 2 oxidized [2Fe-2S]-[ferredoxin] + 2 H2O. The protein operates within lipid metabolism; fatty acid metabolism. Functionally, converts stearoyl-ACP to oleoyl-ACP by introduction of a cis double bond between carbons 9 and 10 of the acyl chain. The protein is Stearoyl-[acyl-carrier-protein] 9-desaturase 4, chloroplastic (S-ACP-DES4) of Arabidopsis thaliana (Mouse-ear cress).